A 295-amino-acid chain; its full sequence is Acetaldehyde dehydrogenase 2 (295 aa).

17–20 (TGNI) is a binding site for NAD(+). Catalysis depends on C132, which acts as the Acyl-thioester intermediate. NAD(+) is bound by residues 164–172 (SVGPASRAN) and N275.

Belongs to the acetaldehyde dehydrogenase family.

The catalysed reaction is acetaldehyde + NAD(+) + CoA = acetyl-CoA + NADH + H(+). The chain is Acetaldehyde dehydrogenase 2 from Salinispora arenicola (strain CNS-205).